Here is a 215-residue protein sequence, read N- to C-terminus: 3-isopropylmalate dehydratase small subunit (215 aa).

The protein belongs to the LeuD family. LeuD type 1 subfamily. As to quaternary structure, heterodimer of LeuC and LeuD.

It catalyses the reaction (2R,3S)-3-isopropylmalate = (2S)-2-isopropylmalate. Its pathway is amino-acid biosynthesis; L-leucine biosynthesis; L-leucine from 3-methyl-2-oxobutanoate: step 2/4. In terms of biological role, catalyzes the isomerization between 2-isopropylmalate and 3-isopropylmalate, via the formation of 2-isopropylmaleate. The chain is 3-isopropylmalate dehydratase small subunit from Ectopseudomonas mendocina (strain ymp) (Pseudomonas mendocina).